A 267-amino-acid polypeptide reads, in one-letter code: Cilia- and flagella-associated protein 300 (267 aa).

This sequence belongs to the CFAP300 family. In terms of assembly, interacts with DNAAF2. As to expression, expressed in the left-right organiser (LRO) node at 8.25 dpc.

The protein resides in the cytoplasm. Its subcellular location is the cytoskeleton. The protein localises to the cilium axoneme. Cilium- and flagellum-specific protein that plays a role in axonemal structure organization and motility. May play a role in outer and inner dynein arm assembly. In Mus musculus (Mouse), this protein is Cilia- and flagella-associated protein 300.